Consider the following 190-residue polypeptide: Xanthine phosphoribosyltransferase (190 aa).

Xanthine-binding residues include leucine 20 and asparagine 27. Alanine 128–alanine 132 lines the 5-phospho-alpha-D-ribose 1-diphosphate pocket. Residue lysine 156 participates in xanthine binding.

This sequence belongs to the purine/pyrimidine phosphoribosyltransferase family. Xpt subfamily. As to quaternary structure, homodimer.

The protein resides in the cytoplasm. The catalysed reaction is XMP + diphosphate = xanthine + 5-phospho-alpha-D-ribose 1-diphosphate. The protein operates within purine metabolism; XMP biosynthesis via salvage pathway; XMP from xanthine: step 1/1. Its function is as follows. Converts the preformed base xanthine, a product of nucleic acid breakdown, to xanthosine 5'-monophosphate (XMP), so it can be reused for RNA or DNA synthesis. The sequence is that of Xanthine phosphoribosyltransferase from Finegoldia magna (strain ATCC 29328 / DSM 20472 / WAL 2508) (Peptostreptococcus magnus).